The primary structure comprises 450 residues: GTPase Der (450 aa).

EngA-type G domains follow at residues 3–170 (PTIA…LATG) and 183–356 (LKIA…AECS). Residues 9–16 (GRPNVGKS), 56–60 (DTGGL), 122–125 (NKVD), 189–196 (GRPNAGKS), 236–240 (DTAGV), and 301–304 (NKID) contribute to the GTP site. The KH-like domain occupies 357 to 441 (LRISTGQLNR…PLNIVFRSTF (85 aa)).

This sequence belongs to the TRAFAC class TrmE-Era-EngA-EngB-Septin-like GTPase superfamily. EngA (Der) GTPase family. As to quaternary structure, associates with the 50S ribosomal subunit.

Its function is as follows. GTPase that plays an essential role in the late steps of ribosome biogenesis. The chain is GTPase Der from Maridesulfovibrio salexigens (strain ATCC 14822 / DSM 2638 / NCIMB 8403 / VKM B-1763) (Desulfovibrio salexigens).